A 288-amino-acid chain; its full sequence is Cell division protein ZipA (288 aa).

Residue Met-1 is a topological domain, periplasmic. A helical transmembrane segment spans residues 2–22 (EIGLREWLIVIGIIVIAGILF). At 23–288 (DGWRRMRGGK…FERRALTQKR (266 aa)) the chain is on the cytoplasmic side. Composition is skewed to basic and acidic residues over residues 66 to 75 (KEPQLDEHDL) and 83 to 93 (REAREPRESGS). A disordered region spans residues 66–141 (KEPQLDEHDL…AKSSPAVADK (76 aa)). Low complexity predominate over residues 106 to 117 (GDLNLDLDLDGG).

The protein belongs to the ZipA family. In terms of assembly, interacts with FtsZ via their C-terminal domains.

The protein localises to the cell inner membrane. Essential cell division protein that stabilizes the FtsZ protofilaments by cross-linking them and that serves as a cytoplasmic membrane anchor for the Z ring. Also required for the recruitment to the septal ring of downstream cell division proteins. The polypeptide is Cell division protein ZipA (Pseudomonas fluorescens (strain Pf0-1)).